The following is a 70-amino-acid chain: Large ribosomal subunit protein bL31 (70 aa).

K8 is subject to N6-acetyllysine. C16, C18, C37, and C40 together coordinate Zn(2+).

It belongs to the bacterial ribosomal protein bL31 family. Type A subfamily. In terms of assembly, part of the 50S ribosomal subunit. Zn(2+) is required as a cofactor.

Functionally, binds the 23S rRNA. The chain is Large ribosomal subunit protein bL31 from Escherichia coli O6:K15:H31 (strain 536 / UPEC).